Here is a 112-residue protein sequence, read N- to C-terminus: uncharacterized protein (112 aa).

2 consecutive transmembrane segments (helical) span residues 55–75 (LLEI…PTLF) and 91–111 (LIML…LLLL).

The protein resides in the membrane. This is an uncharacterized protein from Saccharomyces cerevisiae (strain ATCC 204508 / S288c) (Baker's yeast).